The following is a 456-amino-acid chain: UDP-N-acetylmuramoylalanine--D-glutamate ligase (456 aa).

Residue 122–128 (GSNGKST) participates in ATP binding.

It belongs to the MurCDEF family.

It localises to the cytoplasm. The catalysed reaction is UDP-N-acetyl-alpha-D-muramoyl-L-alanine + D-glutamate + ATP = UDP-N-acetyl-alpha-D-muramoyl-L-alanyl-D-glutamate + ADP + phosphate + H(+). It functions in the pathway cell wall biogenesis; peptidoglycan biosynthesis. In terms of biological role, cell wall formation. Catalyzes the addition of glutamate to the nucleotide precursor UDP-N-acetylmuramoyl-L-alanine (UMA). In Saccharophagus degradans (strain 2-40 / ATCC 43961 / DSM 17024), this protein is UDP-N-acetylmuramoylalanine--D-glutamate ligase.